The following is a 566-amino-acid chain: Type 3 secretion system secretin (566 aa).

A signal peptide spans 1 to 22 (MKKFNIKSLTLLIVLLPLIVNA).

Belongs to the bacterial secretin family. T3SS SctC subfamily. The core secretion machinery of the T3SS is composed of approximately 20 different proteins, including cytoplasmic components, a base, an export apparatus and a needle. This subunit is part of the base, which anchors the injectisome in the bacterial cell envelope. Forms a stable homooligomeric complex. Interacts with the pilotin MxiM/SctG and the inner membrane ring outer protein MxiJ/SctJ.

It localises to the cell outer membrane. Its function is as follows. Component of the type III secretion system (T3SS), also called injectisome, which is used to inject bacterial effector proteins into eukaryotic host cells. Forms a ring-shaped multimeric structure with an apparent central pore in the outer membrane. Necessary for the secretion of Ipa invasins. The sequence is that of Type 3 secretion system secretin from Shigella flexneri.